The sequence spans 345 residues: Lysine-specific demethylase JMJ32 (345 aa).

In terms of domain architecture, JmjC spans 122–315 (GYLQQQNDCF…IKYAYFNFLQ (194 aa)). Positions 174, 176, and 281 each coordinate Fe cation.

The protein belongs to the JARID1 histone demethylase family. Fe(2+) serves as cofactor. As to expression, expressed ubiquitously including in vasculatures, leaves, siliques, roots and inflorescences. Present in the root meristem. Accumulates in cotyledons and root tips of young seedlings.

Its subcellular location is the nucleus. It is found in the cytoplasm. The protein localises to the endoplasmic reticulum. It carries out the reaction N(6),N(6),N(6)-trimethyl-L-lysyl(27)-[histone H3] + 2-oxoglutarate + O2 = N(6),N(6)-dimethyl-L-lysyl(27)-[histone H3] + formaldehyde + succinate + CO2. The enzyme catalyses N(6),N(6)-dimethyl-L-lysyl(27)-[histone H3] + 2-oxoglutarate + O2 = N(6)-methyl-L-lysyl(27)-[histone H3] + formaldehyde + succinate + CO2. It catalyses the reaction N(6),N(6),N(6)-trimethyl-L-lysyl(27)-[histone H3] + 2 2-oxoglutarate + 2 O2 = N(6)-methyl-L-lysyl(27)-[histone H3] + 2 formaldehyde + 2 succinate + 2 CO2. In terms of biological role, histone demethylase that demethylates 'Lys-27' (H3K27me) of histone H3 with a specific activity for H3K27me3 and H3K27me2, and involved in the regulation of gene expression. No activity on H3K27me1. Together with JMJ30, regulates the flowering-repressor FLOWERING LOCUS C (FLC) locus by removing the repressive histone modification H3 lysine 27 trimethylation (H3K27me3), especially at elevated temperatures (e.g. 29 degrees Celsius), thus preventing extreme precocious flowering. JMJ30 and JMJ32 are regulators involved in the integration of abscisic acid (ABA) and brassinosteroids (BR) signaling pathways. Together with JMJ30, controls ABA-mediated growth arrest during the post-germination stage in unfavorable conditions, and responses to ABA during root development, via the removal of repressive histone mark (H3K27me3) from the SnRK2.8 promoter, thus promoting SnRK2.8 expression and subsequent kinase-dependent ABI3 activation. In addition, removes the repressive histone marks (H3K27me3) from the BZR1 locus in response to stress and ABA, thus activating the BR signaling pathway which, in turn, inhibits the ABA signaling pathway. The polypeptide is Lysine-specific demethylase JMJ32 (Arabidopsis thaliana (Mouse-ear cress)).